A 457-amino-acid chain; its full sequence is ADP-dependent glucose/glucosamine kinase (457 aa).

An ADPK domain is found at 5-457 (TNWESLYEKA…SAFVSEFSLH (453 aa)). Residues aspartate 37, glutamate 91, 115–116 (GQ), and histidine 179 contribute to the D-glucose site. Glutamate 269 is a Mg(2+) binding site. An ADP-binding site is contributed by asparagine 295. Glutamate 298 contacts Mg(2+). ADP-binding positions include 345 to 346 (HT), valine 432, and glycine 442. Position 443 (aspartate 443) interacts with D-glucose. Aspartate 443 provides a ligand contact to Mg(2+). The active-site Proton acceptor is the aspartate 443.

It belongs to the ADP-dependent glucokinase family. Mg(2+) serves as cofactor.

The protein localises to the cytoplasm. The catalysed reaction is D-glucose + ADP = D-glucose 6-phosphate + AMP + H(+). It catalyses the reaction D-glucosamine + ADP = D-glucosamine 6-phosphate + AMP + H(+). The protein operates within carbohydrate degradation; glycolysis. Inhibited by 8-bromoadenosine phosphate (8-Br-AMP). Catalyzes the ADP-dependent phosphorylation of D-glucose to D-glucose 6-phosphate and glucosamine to glucosamine 6-phosphate. This chain is ADP-dependent glucose/glucosamine kinase, found in Pyrococcus horikoshii (strain ATCC 700860 / DSM 12428 / JCM 9974 / NBRC 100139 / OT-3).